A 209-amino-acid polypeptide reads, in one-letter code: MEGVTIVDHPLVQHKLTLVRDKSISTKSFRELIKEIGMLLCYEVTRDLPLADTVIETPLATMHSAKIAGKKLVFVPMLRAGTTFVDGMMDLVPTARVAHIGLYREPHSFAAVEYFFKSPSDLGERLAIVVTPVVATANTAVAAIDRLKERGAKDIRLACLIAAPEGLERLRGLHPDVPIWTAAVDEGLDENGFILPGLGDAGDRAYGTR.

5-phospho-alpha-D-ribose 1-diphosphate contacts are provided by residues arginine 79, arginine 104, and 131-139; that span reads TPVVATANT. Uracil contacts are provided by residues isoleucine 194 and 199–201; that span reads GDA. A 5-phospho-alpha-D-ribose 1-diphosphate-binding site is contributed by aspartate 200.

This sequence belongs to the UPRTase family. Requires Mg(2+) as cofactor.

It carries out the reaction UMP + diphosphate = 5-phospho-alpha-D-ribose 1-diphosphate + uracil. Its pathway is pyrimidine metabolism; UMP biosynthesis via salvage pathway; UMP from uracil: step 1/1. With respect to regulation, allosterically activated by GTP. Catalyzes the conversion of uracil and 5-phospho-alpha-D-ribose 1-diphosphate (PRPP) to UMP and diphosphate. This is Uracil phosphoribosyltransferase from Bradyrhizobium diazoefficiens (strain JCM 10833 / BCRC 13528 / IAM 13628 / NBRC 14792 / USDA 110).